The following is a 261-amino-acid chain: Neurovirulence factor ICP34.5 (261 aa).

Positions 1–17 are enriched in basic residues; the sequence is MSRRRGPRRRGPRRRPR. The required for nucleolar localization stretch occupies residues 1 to 19; the sequence is MSRRRGPRRRGPRRRPRPG. Disordered stretches follow at residues 1–59, 75–135, and 145–164; these read MSRR…SAPA, DSDD…LALR, and RLSL…APRG. 4 consecutive repeats follow at residues 3–7, 8–12, 16–23, and 24–31; these read RRRGP and PRPGAPAV. The interval 3 to 12 is 2 X 5 AA tandem repeats of R-R-R-G-P; sequence RRRGPRRRGP. Residues 16–31 form a 2 X 8 AA tandem repeats of P-R-P-G-A-P-A-V region; that stretch reads PRPGAPAVPRPGAPAV. Over residues 18-32 the composition is skewed to pro residues; sequence PGAPAVPRPGAPAVP. The span at 75-88 shows a compositional bias: acidic residues; sequence DSDDADYAGNDDAE. The span at 101 to 111 shows a compositional bias: low complexity; sequence APEAPHAAPAA. The short motif at 128-137 is the Nuclear export signal element; the sequence is LPPHLALRLR. Residues 163-176 are binding to PP1CA; that stretch reads RGKVCFSPRVQVRH. Residues 163–176 form an interaction with host PPP1CA region; the sequence is RGKVCFSPRVQVRH. The tract at residues 178-261 is important for interferon resistance; the sequence is VAWETAARLA…AAAGPGRRAV (84 aa). A Bipartite nuclear localization signal motif is present at residues 188–206; sequence RRGSWARERADRDRFRRRV. The tract at residues 206-221 is interaction with host EIF2S1/EIF-2ALPHA; sequence VAAAEAVIGPCLEPEA. The tract at residues 223-261 is disordered; sequence ARARARARAHEDGGPAEEEEAAAAARGSSAAAGPGRRAV. The segment covering 244–261 has biased composition (low complexity); sequence AAAARGSSAAAGPGRRAV.

Belongs to the PPP1R15 family. Interacts with host PPP1CA to form a high-molecular-weight complex that dephosphorylates EIF2S1/eIF-2alpha. Interacts with host EIF2S1/eIF-2alpha; this interaction is crucial for the specific dephosphorylation of EIF2S1/eIF-2alpha by PPP1CA.

The protein resides in the host cytoplasm. It is found in the host nucleus. The protein localises to the host nucleolus. Its subcellular location is the virion. In terms of biological role, plays essential roles in viral nuclear egress to mediate capsid transit across the nuclear membrane and also in the inhibition of host immune response and integrated stress response (ISR). Facilitates nuclear egress cooperatively with host C1QBP and protein kinase C/PKC to induce lamin A/C phosphorylation and subsequent reorganization. In turn, lamina disassembles and nuclear egress occurs. Recruits the serine/threonine-protein phosphatase PPP1CA/PP1-alpha to dephosphorylate the translation initiation factor EIF2S1/eIF-2alpha, thereby couteracting the host shutoff of protein synthesis involving double-stranded RNA-dependent protein kinase EIF2AK2/PKR. Also down-modulates the host MHC class II proteins cell surface expression. Acts as a neurovirulence factor that has a profound effect on the growth of the virus in central nervous system tissue, probably through its ability to maintain an environment favorable for viral replication. In Human herpesvirus 2 (strain HG52) (HHV-2), this protein is Neurovirulence factor ICP34.5 (RL1).